The following is a 240-amino-acid chain: Small ribosomal subunit protein uS3 (240 aa).

A KH type-2 domain is found at 39-109 (IRQYVEKNLS…QIRINVVEVA (71 aa)). Residues 214 to 240 (EEQAPAQPATTPKRQRRRQQFEDRSNE) form a disordered region.

The protein belongs to the universal ribosomal protein uS3 family. As to quaternary structure, part of the 30S ribosomal subunit. Forms a tight complex with proteins S10 and S14.

Functionally, binds the lower part of the 30S subunit head. Binds mRNA in the 70S ribosome, positioning it for translation. The sequence is that of Small ribosomal subunit protein uS3 from Gloeothece citriformis (strain PCC 7424) (Cyanothece sp. (strain PCC 7424)).